A 643-amino-acid polypeptide reads, in one-letter code: Threonine--tRNA ligase (643 aa).

The TGS domain occupies 1-61; the sequence is MPIITLPDGA…SVNANINIIT (61 aa). Residues 242–533 are catalytic; that stretch reads DHRKIGKKLD…LIEEYEGKFP (292 aa). Positions 333, 384, and 510 each coordinate Zn(2+).

The protein belongs to the class-II aminoacyl-tRNA synthetase family. Homodimer. It depends on Zn(2+) as a cofactor.

It localises to the cytoplasm. It carries out the reaction tRNA(Thr) + L-threonine + ATP = L-threonyl-tRNA(Thr) + AMP + diphosphate + H(+). In terms of biological role, catalyzes the attachment of threonine to tRNA(Thr) in a two-step reaction: L-threonine is first activated by ATP to form Thr-AMP and then transferred to the acceptor end of tRNA(Thr). Also edits incorrectly charged L-seryl-tRNA(Thr). The polypeptide is Threonine--tRNA ligase (Prochlorococcus marinus (strain SARG / CCMP1375 / SS120)).